The sequence spans 470 residues: Uronate isomerase (470 aa).

It belongs to the metallo-dependent hydrolases superfamily. Uronate isomerase family.

The enzyme catalyses D-glucuronate = D-fructuronate. It carries out the reaction aldehydo-D-galacturonate = keto-D-tagaturonate. It functions in the pathway carbohydrate metabolism; pentose and glucuronate interconversion. This is Uronate isomerase from Cronobacter sakazakii (strain ATCC BAA-894) (Enterobacter sakazakii).